The following is a 365-amino-acid chain: Glycine oxidase (365 aa).

Residues 12-13 (VI), 32-33 (DQ), 40-41 (SS), 45-47 (GGI), and isoleucine 173 each bind FAD. Arginine 302 contacts substrate. 327–333 (HYRNGLV) is a binding site for FAD.

This sequence belongs to the DAO family. ThiO subfamily. Monomer. It depends on FAD as a cofactor.

The enzyme catalyses glycine + O2 + H2O = glyoxylate + H2O2 + NH4(+). It catalyses the reaction sarcosine + O2 + H2O = methylamine + glyoxylate + H2O2. It functions in the pathway cofactor biosynthesis; thiamine diphosphate biosynthesis. Functionally, catalyzes the oxidation of glycine, leading to glyoxyl imine and hydrogen peroxide as primary products; glyoxyl imine is used for the biosynthesis of the thiazole ring of thiamine. Otherwise, glyoxyl imine is spontaneously hydrolyzed in water to produce glyoxylate and ammonia. Can also use sarcosine (N-methylglycine) as substrate, and, to a lesser extent, N-ethylglycine and D-proline. Has no activity towards other amino-acids D-Asp, D-Glu, D-Gln, D-His, D-Leu, D-Lys, D-ornithine, D-Trp, D-Val, L-Ala, L-Asp, L-Glu, L-His, L-Leu, L-Lys, L-Met and L-Pro. This is Glycine oxidase from Pseudomonas putida (strain ATCC 47054 / DSM 6125 / CFBP 8728 / NCIMB 11950 / KT2440).